A 410-amino-acid polypeptide reads, in one-letter code: Protein BTN2 (410 aa).

Disordered stretches follow at residues 223–264 (INEP…TKED) and 276–410 (MQEE…IEEI). 2 stretches are compositionally biased toward basic and acidic residues: residues 233 to 264 (SKID…TKED) and 276 to 311 (MQEE…KESL). Residues 243 to 330 (NMSESLKEEE…QQKKLQNSKS (88 aa)) adopt a coiled-coil conformation. Positions 334-362 (SEIEASNKNNNSNSGSAESDNESINSDSD) are enriched in low complexity. Polar residues predominate over residues 364–373 (TLDFSVSGNT).

Interacts with RHB1, IST2, TDA3 and YIF1.

The protein resides in the cytoplasm. Its subcellular location is the late endosome. Functionally, V-SNARE binding protein that facilitates specific protein retrieval from a late endosome to the Golgi. Modulates the rate of arginine uptake. Involved in pH homeostasis. Required for the correct localization of IST2. May be involved in ion homeostasis together with IST2. The sequence is that of Protein BTN2 (BTN2) from Saccharomyces cerevisiae (strain ATCC 204508 / S288c) (Baker's yeast).